The sequence spans 59 residues: Large ribosomal subunit protein bL32 (59 aa).

The segment at 1 to 59 is disordered; the sequence is MAVQQNKKSPSKRGMHRSHDALTAPALSVDSTTGEVHRPHHISPNGMYRGRKVVKVKGE. Residues 49–59 are compositionally biased toward basic residues; that stretch reads RGRKVVKVKGE.

This sequence belongs to the bacterial ribosomal protein bL32 family.

The polypeptide is Large ribosomal subunit protein bL32 (rpmF) (Neisseria meningitidis serogroup A / serotype 4A (strain DSM 15465 / Z2491)).